The primary structure comprises 118 residues: uncharacterized protein (118 aa).

This is an uncharacterized protein from Caenorhabditis elegans.